A 473-amino-acid chain; its full sequence is Ribosomal RNA small subunit methyltransferase F (473 aa).

Residues 123–129, Glu-147, Asp-174, and Asp-192 contribute to the S-adenosyl-L-methionine site; that span reads AAAPGSK. Cys-245 acts as the Nucleophile in catalysis.

The protein belongs to the class I-like SAM-binding methyltransferase superfamily. RsmB/NOP family.

The protein resides in the cytoplasm. The enzyme catalyses cytidine(1407) in 16S rRNA + S-adenosyl-L-methionine = 5-methylcytidine(1407) in 16S rRNA + S-adenosyl-L-homocysteine + H(+). Its function is as follows. Specifically methylates the cytosine at position 1407 (m5C1407) of 16S rRNA. The polypeptide is Ribosomal RNA small subunit methyltransferase F (Vibrio atlanticus (strain LGP32) (Vibrio splendidus (strain Mel32))).